We begin with the raw amino-acid sequence, 44 residues long: Brevinin-1PLa (44 aa).

A propeptide spanning residues 1–18 (NAEEERRDEPDETDVEVE) is cleaved from the precursor. A disulfide bridge connects residues C38 and C44.

As to expression, expressed by the skin glands.

The protein resides in the secreted. Its function is as follows. Antimicrobial peptide. In Lithobates palustris (Pickerel frog), this protein is Brevinin-1PLa.